Reading from the N-terminus, the 167-residue chain is Fluoride-specific ion channel FluC (167 aa).

Helical transmembrane passes span His-32–Ala-52, Ile-69–Val-89, Phe-102–Phe-122, and Leu-137–Leu-157. Na(+) contacts are provided by Gly-109 and Ser-112.

Belongs to the fluoride channel Fluc/FEX (TC 1.A.43) family.

Its subcellular location is the cell inner membrane. It catalyses the reaction fluoride(in) = fluoride(out). With respect to regulation, na(+) is not transported, but it plays an essential structural role and its presence is essential for fluoride channel function. Functionally, fluoride-specific ion channel. Important for reducing fluoride concentration in the cell, thus reducing its toxicity. The sequence is that of Fluoride-specific ion channel FluC from Xanthomonas oryzae pv. oryzae (strain KACC10331 / KXO85).